The primary structure comprises 206 residues: Inosine triphosphate pyrophosphatase (206 aa).

21–26 (TGNAKK) contributes to the ITP binding site. Residue Glu49 coordinates Mg(2+). ITP-binding positions include Lys61, 77-78 (DT), Lys94, 153-156 (FGWD), Lys176, and 181-182 (HR).

The protein belongs to the HAM1 NTPase family. Homodimer. Mg(2+) is required as a cofactor. Mn(2+) serves as cofactor.

Its subcellular location is the cytoplasm. It catalyses the reaction ITP + H2O = IMP + diphosphate + H(+). The enzyme catalyses dITP + H2O = dIMP + diphosphate + H(+). The catalysed reaction is XTP + H2O = XMP + diphosphate + H(+). Its function is as follows. Pyrophosphatase that hydrolyzes non-canonical purine nucleotides such as inosine triphosphate (ITP), deoxyinosine triphosphate (dITP) or xanthosine 5'-triphosphate (XTP) to their respective monophosphate derivatives. The enzyme does not distinguish between the deoxy- and ribose forms. Probably excludes non-canonical purines from RNA and DNA precursor pools, thus preventing their incorporation into RNA and DNA and avoiding chromosomal lesions. The protein is Inosine triphosphate pyrophosphatase of Vitis vinifera (Grape).